The following is a 68-amino-acid chain: Amphipathic peptide CT1 (68 aa).

The first 23 residues, 1-23 (MKTQIVILIVAVLFLQLVSQSDA), serve as a signal peptide directing secretion. Leucine amide is present on L36. The propeptide occupies 40–68 (GLKNLDQYNDLFDGEISDADIKFLKDLMR).

Belongs to the non-disulfide-bridged peptide (NDBP) superfamily. Short antimicrobial peptide (group 4) family. As to expression, expressed by the venom gland.

It is found in the secreted. The protein resides in the target cell membrane. In terms of biological role, amphipathic peptide that shows no antibacterial activity even at 50 uM but shows a low hemolytic activity against human erythrocytes. In Mesomexovis subcristatus (Scorpion), this protein is Amphipathic peptide CT1.